We begin with the raw amino-acid sequence, 442 residues long: Glutamate synthase large subunit-like protein (442 aa).

The segment at 108–133 is disordered; the sequence is LGRGATASGTSTTTGDGGMTDEERGH. Low complexity predominate over residues 109 to 121; that stretch reads GRGATASGTSTTT.

It belongs to the glutamate synthase family.

The chain is Glutamate synthase large subunit-like protein (glxD) from Rhizobium meliloti (strain 1021) (Ensifer meliloti).